We begin with the raw amino-acid sequence, 384 residues long: FAD-dependent urate hydroxylase (384 aa).

Residues G11, 30–31, S43, and V125 contribute to the FAD site; that span reads EA. Residues N178, R204, and 216–218 contribute to the substrate site; that span reads YFF. FAD is bound by residues D285 and 295-299; that span reads GQGGC.

This sequence belongs to the FAD-dependent urate hydroxylase family. FAD serves as cofactor.

It catalyses the reaction urate + NADH + O2 + H(+) = 5-hydroxyisourate + NAD(+) + H2O. It functions in the pathway purine metabolism; urate degradation. In terms of biological role, catalyzes the hydroxylation of uric acid to 5-hydroxyisourate. The polypeptide is FAD-dependent urate hydroxylase (hpxO) (Klebsiella pneumoniae).